Reading from the N-terminus, the 85-residue chain is Cell division topological specificity factor (85 aa).

It belongs to the MinE family.

Its function is as follows. Prevents the cell division inhibition by proteins MinC and MinD at internal division sites while permitting inhibition at polar sites. This ensures cell division at the proper site by restricting the formation of a division septum at the midpoint of the long axis of the cell. The protein is Cell division topological specificity factor of Deinococcus geothermalis (strain DSM 11300 / CIP 105573 / AG-3a).